A 645-amino-acid polypeptide reads, in one-letter code: Minor extracellular protease Epr (645 aa).

An N-terminal signal peptide occupies residues 1 to 27 (MKNMSCKLVVSVTLFFSFLTIGPLAHA). The propeptide occupies 28–103 (QNSSEKEVIV…AADSTDFKVL (76 aa)). The 268-residue stretch at 115-382 (QWNLEPIQVK…YGLIQYKAQA (268 aa)) folds into the Peptidase S8 domain. Residues Asp-142, His-172, and Ser-326 each act as charge relay system in the active site. Disordered regions lie at residues 490 to 577 (KQAK…KTAL) and 591 to 645 (AEAK…KPKK). Residues 491–508 (QAKDKVAKAEKSKKKTDV) are compositionally biased toward basic and acidic residues. The segment covering 522-547 (SEKTSLQKRLNKVKSTNLKTAQQSVS) has biased composition (polar residues). Residues 592–610 (EAKKVETAKAKVKKAEKDK) show a composition bias toward basic and acidic residues.

It belongs to the peptidase S8 family. Post-translationally, may undergo two steps of processing in its passage through the cell membrane: removal of the N-terminal signal sequence and cleavage of the C-terminal domain. Several active forms of Epr with molecular masses between 40 and 34 kDa were found in the medium of B.subtilis cultures. The size variation of the active forms expressed by the complete epr gene appears to be the result of partial removal of the C-terminus either by processing or degradation.

The protein localises to the secreted. Its subcellular location is the cell wall. Its activity is regulated as follows. Requires Ca(2+) for stability. Activity is inhibited by phenylmethylsulfonyl fluoride (PMSF) and EDTA. Functionally, serine protease. Involved in the production of the competence and sporulation stimulating factor CSF. In addition, is essential for swarming motility. Plays a key role in DegU-mediated swarming motility. The protease activity is dispensable for swarming. Not essential for growth or sporulation. In Bacillus subtilis (strain 168), this protein is Minor extracellular protease Epr.